The sequence spans 704 residues: Elongation factor G 2 (704 aa).

One can recognise a tr-type G domain in the interval 8-290; sequence ERYRNIGISA…AIIDYLPSPV (283 aa). GTP is bound by residues 17–24, 88–92, and 142–145; these read AHIDAGKT, DTPGH, and NKMD.

The protein belongs to the TRAFAC class translation factor GTPase superfamily. Classic translation factor GTPase family. EF-G/EF-2 subfamily.

Its subcellular location is the cytoplasm. Catalyzes the GTP-dependent ribosomal translocation step during translation elongation. During this step, the ribosome changes from the pre-translocational (PRE) to the post-translocational (POST) state as the newly formed A-site-bound peptidyl-tRNA and P-site-bound deacylated tRNA move to the P and E sites, respectively. Catalyzes the coordinated movement of the two tRNA molecules, the mRNA and conformational changes in the ribosome. The chain is Elongation factor G 2 from Polaromonas sp. (strain JS666 / ATCC BAA-500).